The primary structure comprises 437 residues: Methylenetetrahydrofolate--tRNA-(uracil-5-)-methyltransferase TrmFO (437 aa).

10–15 (GAGLAG) provides a ligand contact to FAD.

Belongs to the MnmG family. TrmFO subfamily. Requires FAD as cofactor.

The protein resides in the cytoplasm. The catalysed reaction is uridine(54) in tRNA + (6R)-5,10-methylene-5,6,7,8-tetrahydrofolate + NADH + H(+) = 5-methyluridine(54) in tRNA + (6S)-5,6,7,8-tetrahydrofolate + NAD(+). It catalyses the reaction uridine(54) in tRNA + (6R)-5,10-methylene-5,6,7,8-tetrahydrofolate + NADPH + H(+) = 5-methyluridine(54) in tRNA + (6S)-5,6,7,8-tetrahydrofolate + NADP(+). Catalyzes the folate-dependent formation of 5-methyl-uridine at position 54 (M-5-U54) in all tRNAs. The sequence is that of Methylenetetrahydrofolate--tRNA-(uracil-5-)-methyltransferase TrmFO from Pelotomaculum thermopropionicum (strain DSM 13744 / JCM 10971 / SI).